The chain runs to 394 residues: MWKIMRSWKCGGMRWAHRQRPSHELLSQLSFDQHYKIRSNIELLIQDYASKPIAPLNYEYFLQYRPPLTKKEEYMLTIKTINLLLSLTCKRLNAIQRLPYNAVINPHIERTNSLYLKSLQTLLSIAYPYELHNPPKIQAKFTELLDDHEDAIVVLAKGLQEIQSCYPKFQISQFLNFHLKERITMKLLVTHYLSLMAQNKGDTNKRMIGILHRDLPIAQLIKHVSDYVNDICFVKFNTQRTPVLIHPPSQDITFTCIPPILEYIMTEVFKNAFEAQIALGKEHMPIEINLLKPDDDELYLRIRDHGGGITPEVEALMFNYSYSTHTQQSADSESTDLPGEQINNVSGMGFGLPMCKTYLELFGGKIDVQSLLGWGTDVYIKLKGPSKTALLSKK.

A mitochondrion-targeting transit peptide spans Met1–Arg20. In terms of domain architecture, Histidine kinase spans Ala126–Ser386. Residue His148 is modified to Phosphohistidine; by autocatalysis. Residues Glu267–Glu274, Asp304, Ser323–Thr324, and Gly347–Leu352 each bind ATP.

Belongs to the PDK/BCKDK protein kinase family. Interacts with PKP2.

Its subcellular location is the mitochondrion matrix. It catalyses the reaction L-seryl-[pyruvate dehydrogenase E1 alpha subunit] + ATP = O-phospho-L-seryl-[pyruvate dehydrogenase E1 alpha subunit] + ADP + H(+). Its function is as follows. Inhibits the mitochondrial pyruvate dehydrogenase complex by phosphorylation of the E1 alpha subunit (PDA1), thus contributing to the regulation of glucose metabolism. Also involved in telomere maintenance. This is [Pyruvate dehydrogenase (acetyl-transferring)] kinase 1, mitochondrial from Saccharomyces cerevisiae (strain ATCC 204508 / S288c) (Baker's yeast).